A 356-amino-acid polypeptide reads, in one-letter code: Dual-specificity RNA methyltransferase RlmN (356 aa).

Glu87 (proton acceptor) is an active-site residue. A Radical SAM core domain is found at 106–339; that stretch reads QEAKYTICVS…CTIRDSKGID (234 aa). An intrachain disulfide couples Cys113 to Cys344. [4Fe-4S] cluster contacts are provided by Cys120, Cys124, and Cys127. S-adenosyl-L-methionine-binding positions include 170 to 171, Ser202, 225 to 227, and Asn301; these read GE and SLH. Cys344 serves as the catalytic S-methylcysteine intermediate.

Belongs to the radical SAM superfamily. RlmN family. [4Fe-4S] cluster is required as a cofactor.

Its subcellular location is the cytoplasm. The catalysed reaction is adenosine(2503) in 23S rRNA + 2 reduced [2Fe-2S]-[ferredoxin] + 2 S-adenosyl-L-methionine = 2-methyladenosine(2503) in 23S rRNA + 5'-deoxyadenosine + L-methionine + 2 oxidized [2Fe-2S]-[ferredoxin] + S-adenosyl-L-homocysteine. It catalyses the reaction adenosine(37) in tRNA + 2 reduced [2Fe-2S]-[ferredoxin] + 2 S-adenosyl-L-methionine = 2-methyladenosine(37) in tRNA + 5'-deoxyadenosine + L-methionine + 2 oxidized [2Fe-2S]-[ferredoxin] + S-adenosyl-L-homocysteine. Specifically methylates position 2 of adenine 2503 in 23S rRNA and position 2 of adenine 37 in tRNAs. m2A2503 modification seems to play a crucial role in the proofreading step occurring at the peptidyl transferase center and thus would serve to optimize ribosomal fidelity. In Sulfurimonas denitrificans (strain ATCC 33889 / DSM 1251) (Thiomicrospira denitrificans (strain ATCC 33889 / DSM 1251)), this protein is Dual-specificity RNA methyltransferase RlmN.